Here is a 361-residue protein sequence, read N- to C-terminus: MKTIIAAYSGVLRGTGSSLLSAVHDLPSIPWLSKSSVVRHLQIISVLQWVLSFLILGVACTAVLVYIFCTDLWLIAALYFTWMVLDWNTPYKGGRRSSWVRNWAVWRYFRDYFPVKLVKTHNLLPSRNYIFGYHPHGIMCLGAFCNFGTEATGVSKKFPGIKCHLATLAGNFRMPVLREYLMSGGICPVNRDTINYILSKNGTGNAVVIAVGGAAESLNCRPGKNTVTLLHRKGFVKVALQHGADLVPIYSFGENETYKQVVFEEGSWGRWIQQKFQKYVGFAPCLFHGCSFFSSNSWGLVPYANPITTVVGEPITVPKIEQPTQKDVELYHSMYLSSLHRLFDKYKTKLGLPDSETLEFI.

Over 1 to 42 (MKTIIAAYSGVLRGTGSSLLSAVHDLPSIPWLSKSSVVRHLQ) the chain is Cytoplasmic. The chain crosses the membrane as a helical span at residues 43–61 (IISVLQWVLSFLILGVACT). Topologically, residues 62–65 (AVLV) are lumenal. Residues 66-85 (YIFCTDLWLIAALYFTWMVL) traverse the membrane as a helical segment. Topologically, residues 86–361 (DWNTPYKGGR…LPDSETLEFI (276 aa)) are cytoplasmic.

It belongs to the diacylglycerol acyltransferase family.

It is found in the endoplasmic reticulum membrane. Its subcellular location is the lipid droplet. It localises to the cytoplasm. The protein localises to the perinuclear region. It catalyses the reaction an acyl-CoA + a 1,2-diacyl-sn-glycerol = a triacyl-sn-glycerol + CoA. It carries out the reaction all-trans-retinol + an acyl-CoA = an all-trans-retinyl ester + CoA. The catalysed reaction is 2-(9Z-octadecenoyl)-glycerol + (9Z)-octadecenoyl-CoA = 1,2-di-(9Z-octadecenoyl)-sn-glycerol + CoA. The enzyme catalyses 1,2-di-(9Z-octadecenoyl)-sn-glycerol + (9Z)-octadecenoyl-CoA = 1,2,3-tri-(9Z-octadecenoyl)-glycerol + CoA. It catalyses the reaction all-trans-retinol + hexadecanoyl-CoA = all-trans-retinyl hexadecanoate + CoA. It carries out the reaction 1-O-(9Z-octadecenyl)-glycerol + (9Z)-octadecenoyl-CoA = 1-O-(9Z-octadecyl)-3-(9Z-octadecenoyl)-glycerol + CoA. The catalysed reaction is 1-(9Z-octadecenoyl)-glycerol + (9Z)-octadecenoyl-CoA = 1,2-di-(9Z-octadecenoyl)-glycerol + CoA. The enzyme catalyses 1,2-di-(9Z-octadecenoyl)-sn-glycerol + hexadecanoyl-CoA = 1,2-di-(9Z)-octadecenoyl-3-hexadecanoyl-sn-glycerol + CoA. It catalyses the reaction 1,3-di-(9Z-octadecenoyl)-glycerol + (9Z)-octadecenoyl-CoA = 1,2,3-tri-(9Z-octadecenoyl)-glycerol + CoA. It carries out the reaction 2,3-di-(9Z)-octadecenoyl-sn-glycerol + (9Z)-octadecenoyl-CoA = 1,2,3-tri-(9Z-octadecenoyl)-glycerol + CoA. The catalysed reaction is 2-(9Z-octadecenoyl)-glycerol + hexadecanoyl-CoA = 1-hexadecanoyl-2-(9Z-octadecenoyl)-sn-glycerol + CoA. The protein operates within glycerolipid metabolism; triacylglycerol biosynthesis. Functionally, essential acyltransferase that catalyzes the terminal and only committed step in triacylglycerol synthesis by using diacylglycerol and fatty acyl CoA as substrates. Required for synthesis and storage of intracellular triglycerides. Probably plays a central role in cytosolic lipid accumulation. This chain is Diacylglycerol O-acyltransferase 2 (dgat2), found in Xenopus laevis (African clawed frog).